The chain runs to 384 residues: MATTTEKTPAAPGVVATESNQAVPAISLEKVSKTYRSGQVTTTAVESIDLEIRQGEFFSLLGPSGCGKTTTMRMIAGFEEPTSGVVRLSGKDVTGVPPNRRDVNMVFQSYALFPHMTVAENVAFGLKRKKVPAAEIRTRVAEMLELVELGDRAKYKPRQLSGGQQQRVALARALVNRPSALLLDEPLGALDLKLRQAMQLELKRIQREVGITFVYVTHDQSEALTMSDRIAVMNKGRIEQLGTPAQIYETPATRFVAGFIGTSNILTGTAQRVSDTLVRIDYGGDQHVLANTPQQMSDLGLVITVRPEKIRLGKDVPDANVSRIRGTVREVVYLGATTHYTVRTVDDTDIVVFQQNSSDASNLADHGDTVWLSWRPEHSYVLPG.

Residues 26–260 (ISLEKVSKTY…PATRFVAGFI (235 aa)) enclose the ABC transporter domain. ATP is bound at residue 62 to 69 (GPSGCGKT).

Belongs to the ABC transporter superfamily. Spermidine/putrescine importer (TC 3.A.1.11.1) family. The complex is composed of two ATP-binding proteins (PotA), two transmembrane proteins (PotB and PotC) and a solute-binding protein (PotD).

The protein resides in the cell membrane. The catalysed reaction is ATP + H2O + polyamine-[polyamine-binding protein]Side 1 = ADP + phosphate + polyamineSide 2 + [polyamine-binding protein]Side 1.. In terms of biological role, part of the ABC transporter complex PotABCD involved in spermidine/putrescine import. Responsible for energy coupling to the transport system. This chain is Spermidine/putrescine import ATP-binding protein PotA, found in Thermobifida fusca (strain YX).